A 703-amino-acid polypeptide reads, in one-letter code: Zinc finger CCCH domain-containing protein 36 (703 aa).

Disordered stretches follow at residues 1–42 (MAGG…DPNG), 112–176 (LQLH…MKNK), 204–242 (VSGS…AGSS), and 442–481 (HGTL…SSSQ). Over residues 9-25 (GLPAAGEAAKAGRVGVG) the composition is skewed to low complexity. Basic and acidic residues predominate over residues 112 to 125 (LQLHGDEKYQKKAG). Residues 149–169 (VSQSPPDSNALSSQRFGSSSP) are compositionally biased toward polar residues. The C3H1-type zinc finger occupies 176 to 203 (KTRKRTCTFYAQGRCKNGKSCTFLHEGE). Residues 451–468 (TPDKDASHHKGADFDKGG) are compositionally biased toward basic and acidic residues. Over residues 470-481 (SRSTLHVSSSSQ) the composition is skewed to low complexity.

This chain is Zinc finger CCCH domain-containing protein 36, found in Oryza sativa subsp. japonica (Rice).